The chain runs to 328 residues: Stress response kinase A (328 aa).

Asp-201 (proton acceptor) is an active-site residue. Residues Asn-206 and Asp-217 each contribute to the Mg(2+) site. The active site involves Asp-217.

The protein belongs to the SrkA/RdoA protein kinase family. Monomer. The cofactor is Mg(2+).

It is found in the cytoplasm. The enzyme catalyses L-seryl-[protein] + ATP = O-phospho-L-seryl-[protein] + ADP + H(+). It catalyses the reaction L-threonyl-[protein] + ATP = O-phospho-L-threonyl-[protein] + ADP + H(+). Its function is as follows. A protein kinase that phosphorylates Ser and Thr residues. Probably acts to suppress the effects of stress linked to accumulation of reactive oxygen species. Probably involved in the extracytoplasmic stress response. The protein is Stress response kinase A of Escherichia coli O157:H7.